The primary structure comprises 59 residues: Small ribosomal subunit protein eS17 (59 aa).

Belongs to the eukaryotic ribosomal protein eS17 family.

In Halobacterium salinarum (strain ATCC 29341 / DSM 671 / R1), this protein is Small ribosomal subunit protein eS17.